The chain runs to 202 residues: LexA repressor (202 aa).

Residues R28–K48 constitute a DNA-binding region (H-T-H motif). Residues S123 and K160 each act as for autocatalytic cleavage activity in the active site.

Belongs to the peptidase S24 family. In terms of assembly, homodimer.

It catalyses the reaction Hydrolysis of Ala-|-Gly bond in repressor LexA.. Represses a number of genes involved in the response to DNA damage (SOS response), including recA and lexA. In the presence of single-stranded DNA, RecA interacts with LexA causing an autocatalytic cleavage which disrupts the DNA-binding part of LexA, leading to derepression of the SOS regulon and eventually DNA repair. This Pseudomonas chlororaphis (Pseudomonas aureofaciens) protein is LexA repressor.